Here is a 131-residue protein sequence, read N- to C-terminus: Global transcriptional regulator Spx 1 (131 aa).

C10 and C13 are oxidised to a cystine.

The protein belongs to the ArsC family. Spx subfamily. As to quaternary structure, interacts with the C-terminal domain of the alpha subunit of the RNAP.

The protein localises to the cytoplasm. Functionally, global transcriptional regulator that plays a key role in stress response and exerts either positive or negative regulation of genes. Acts by interacting with the C-terminal domain of the alpha subunit of the RNA polymerase (RNAP). This interaction can enhance binding of RNAP to the promoter region of target genes and stimulate their transcription, or block interaction of RNAP with activator. The sequence is that of Global transcriptional regulator Spx 1 from Bacillus anthracis.